The primary structure comprises 474 residues: PRAME family member 13 (474 aa).

One copy of the LRR 1; degenerate repeat lies at 97–124 (RRKLQVLDLRDVDENFWARWPGAWALSC). One copy of the LRR 2; degenerate repeat lies at 179-203 (HLCCSKLVNYLTPIKHLRKSLKIIY). An LRR 3; degenerate repeat occupies 204–230 (LNSIQELEIHNMSWPRLIRKLRCYLKE). One copy of the LRR 4; degenerate repeat lies at 231-265 (MKTLGKLVFSRCHHSTSDNELEGRLVTKFSSVFLG). LRR repeat units lie at residues 266-291 (LEHL…IRCL), 292-323 (QNPL…GYLK), 324-342 (HLNL…PLGA), 348-375 (AASL…GLSR), and 376-400 (CSQL…LLRH).

This sequence belongs to the PRAME family.

In Homo sapiens (Human), this protein is PRAME family member 13.